Here is a 490-residue protein sequence, read N- to C-terminus: MERWGFNSMLFKKEFERRCGLNKSMGSLGPIENTSEDPNLKVKNIHSCSNVDYLFGVKDIWNFISDDTFLVSDRNGDSYSIYFDIENQIFEVDNDHSFLSELESSFSSYRNSSYLNNGFRGEDPYYNSYMSYMYDTQYSWNNHINSCIDNYLQSQICIDTSIISGGESYGDSYIYRAICSGESLNSSENEGSSRRTRTKGSDLTIRESSNDLEVTQKYKHLWVQCENCYGLNYKKFLKSKMNICEQCGYHLKMSSSDRIELLIDPGTWDPMDEDMVSLDPIEFHSEEEPYKDRIDSYQRKTGLTEAVQTGIGQLNGIPVAIGVMDFQFMGGSMGSVVGEKITRLIEHAANQNLPLIIVCASGGARMQEGSLSLMQMAKISSALYDYQLNKKLFYVSILTSPTTGGVTASFGMLGDIIIAEPNAYIAFAGKRVIEQTLNKTVPEGSQAAEYLFQKGLFDLIVPRNLLKSVLSELFKLHAFFPLNQKSSKIK.

A disordered region spans residues leucine 184–leucine 203. The CoA carboxyltransferase N-terminal domain occupies leucine 221–lysine 490. Positions 225, 228, 244, and 247 each coordinate Zn(2+). A C4-type zinc finger spans residues cysteine 225–cysteine 247.

It belongs to the AccD/PCCB family. In terms of assembly, acetyl-CoA carboxylase is a heterohexamer composed of biotin carboxyl carrier protein, biotin carboxylase and 2 subunits each of ACCase subunit alpha and ACCase plastid-coded subunit beta (accD). It depends on Zn(2+) as a cofactor.

The protein resides in the plastid. It is found in the chloroplast stroma. The catalysed reaction is N(6)-carboxybiotinyl-L-lysyl-[protein] + acetyl-CoA = N(6)-biotinyl-L-lysyl-[protein] + malonyl-CoA. The protein operates within lipid metabolism; malonyl-CoA biosynthesis; malonyl-CoA from acetyl-CoA: step 1/1. Its function is as follows. Component of the acetyl coenzyme A carboxylase (ACC) complex. Biotin carboxylase (BC) catalyzes the carboxylation of biotin on its carrier protein (BCCP) and then the CO(2) group is transferred by the transcarboxylase to acetyl-CoA to form malonyl-CoA. The chain is Acetyl-coenzyme A carboxylase carboxyl transferase subunit beta, chloroplastic from Solanum bulbocastanum (Wild potato).